The following is a 322-amino-acid chain: Undecaprenyl-phosphate 4-deoxy-4-formamido-L-arabinose transferase (322 aa).

Topologically, residues 1-235 are cytoplasmic; it reads MFEIHPVKKV…TCLTTTPLRM (235 aa). Residues 236–256 form a helical membrane-spanning segment; that stretch reads LSLLGSIIAIGGFSIAVLLVI. The Periplasmic portion of the chain corresponds to 257–269; sequence LRLTFGPQWAAEG. Residues 270 to 290 traverse the membrane as a helical segment; it reads VFMLFAVLFTFIGAQFIGMGL. Over 291–322 the chain is Cytoplasmic; the sequence is LGEYIGRIYTDVRARPRYFVQQVIRPSSKENE.

Belongs to the glycosyltransferase 2 family.

Its subcellular location is the cell inner membrane. The enzyme catalyses UDP-4-deoxy-4-formamido-beta-L-arabinose + di-trans,octa-cis-undecaprenyl phosphate = 4-deoxy-4-formamido-alpha-L-arabinopyranosyl di-trans,octa-cis-undecaprenyl phosphate + UDP. The protein operates within glycolipid biosynthesis; 4-amino-4-deoxy-alpha-L-arabinose undecaprenyl phosphate biosynthesis; 4-amino-4-deoxy-alpha-L-arabinose undecaprenyl phosphate from UDP-4-deoxy-4-formamido-beta-L-arabinose and undecaprenyl phosphate: step 1/2. It functions in the pathway bacterial outer membrane biogenesis; lipopolysaccharide biosynthesis. Functionally, catalyzes the transfer of 4-deoxy-4-formamido-L-arabinose from UDP to undecaprenyl phosphate. The modified arabinose is attached to lipid A and is required for resistance to polymyxin and cationic antimicrobial peptides. The sequence is that of Undecaprenyl-phosphate 4-deoxy-4-formamido-L-arabinose transferase from Escherichia coli O139:H28 (strain E24377A / ETEC).